We begin with the raw amino-acid sequence, 3011 residues long: Genome polyprotein (3011 aa).

S2 bears the N-acetylserine; by host mark. The interval 2 to 23 (STNPKPQRKTKRNTNRRPQDVK) is interaction with STAT1. The interval 2–58 (STNPKPQRKTKRNTNRRPQDVKFPGGGQIVGGVYLLPRRGPRLGVRATRKTSERSQP) is interaction with EIF2AK2/PKR. Residues 2–59 (STNPKPQRKTKRNTNRRPQDVKFPGGGQIVGGVYLLPRRGPRLGVRATRKTSERSQPR) are interaction with DDX3X. Residues 2 to 75 (STNPKPQRKT…PKARRPEGRT (74 aa)) form a disordered region. The Cytoplasmic segment spans residues 2 to 168 (STNPKPQRKT…EDGVNYATGN (167 aa)). Short sequence motifs (nuclear localization signal) lie at residues 5-13 (PKPQRKTKR) and 38-43 (PRRGPR). Positions 7–16 (PQRKTKRNTN) are enriched in basic residues. Low complexity predominate over residues 32 to 47 (GGVYLLPRRGPRLGVR). Position 53 is a phosphoserine; by host (S53). Short sequence motifs (nuclear localization signal) lie at residues 58–64 (PRGRRQP) and 66–71 (PKARRP). Over residues 58-68 (PRGRRQPIPKA) the composition is skewed to basic residues. S99 carries the post-translational modification Phosphoserine; by host. The tract at residues 112 to 152 (PRRRSRNLGKVIDTLTCGFADLMGYIPLVGAPLGGAARALA) is important for endoplasmic reticulum and mitochondrial localization. S116 carries the post-translational modification Phosphoserine; by host PKA. Residues 122-173 (VIDTLTCGFADLMGYIPLVGAPLGGAARALAHGVRVLEDGVNYATGNLPGCS) form an interaction with APOA2 region. Residues 164–167 (YATG) are important for lipid droplets localization. The helical transmembrane segment at 169 to 189 (LPGCSFSIFLLALLSCLTVPA) threads the bilayer. Residues 178 to 191 (LLALLSCLTVPASA) constitute a propeptide, ER anchor for the core protein, removed in mature form by host signal peptidase. Over 190–358 (SAYQVRNSSG…AGAHWGVLAG (169 aa)) the chain is Lumenal. N-linked (GlcNAc...) asparagine; by host glycosylation is found at N196, N209, and N234. Residues 265 to 296 (LVGSATLCSALYVGDLCGSVFLVGQLFTFSPR) are important for fusion. The N-linked (GlcNAc...) asparagine; by host glycan is linked to N305. Residues 359-379 (IKYFSMVGNWAKVLVVLLLFA) form a helical membrane-spanning segment. At 380–725 (GVDAETHVTG…WEYVVLLFLL (346 aa)) the chain is on the lumenal side. Residues 385-411 (THVTGGNAGRTTAGLVGLLTPGAKQNI) are HVR1. N-linked (GlcNAc...) (high mannose) asparagine; by host glycans are attached at residues N417, N423, N430, and N448. Cystine bridges form between C429-C552, C452-C459, C486-C494, and C503-C508. Residues 474–479 (YANGSG) form an HVR2 region. N-linked (GlcNAc...) (high mannose) asparagine; by host glycosylation occurs at N476. The tract at residues 480 to 493 (LDERPYCWHYPPRP) is CD81-binding 1. Residues N532 and N540 are each glycosylated (N-linked (GlcNAc...) (high mannose) asparagine; by host). Residues 544 to 551 (PPLGNWFG) are CD81-binding 2. N556 carries an N-linked (GlcNAc...) (high mannose) asparagine; by host glycan. An intrachain disulfide couples C564 to C569. An N-linked (GlcNAc...) (high mannose) asparagine; by host glycan is attached at N576. 3 disulfides stabilise this stretch: C581–C585, C597–C620, and C607–C644. N623 and N645 each carry an N-linked (GlcNAc...) (high mannose) asparagine; by host glycan. C652 and C677 form a disulfide bridge. Positions 660–671 (SELSPLLLSTTQ) are EIF2AK2/eIF2-alpha phosphorylation homology domain (PePHD). A helical membrane pass occupies residues 726–746 (LADARVCSCLWMMLLISQAEA). The Lumenal segment spans residues 747–757 (ALENLVILNAA). A helical membrane pass occupies residues 758 to 778 (SLAGTHGLVSFLVFFCFAWYL). At 779–781 (KGR) the chain is on the cytoplasmic side. A helical membrane pass occupies residues 782 to 803 (WVPGAVYALYGMWPLLLLLLAL). Residues 804 to 813 (PQRAYALDTE) lie on the Lumenal side of the membrane. Residues 814–834 (VAASCGGVVLVGLMALTLSPY) traverse the membrane as a helical segment. Residues 835-838 (YKRY) are Cytoplasmic-facing. A helical transmembrane segment spans residues 839-859 (ISWCMWWLQYFLTRVEAQLHV). At 860–881 (WVPPLNVRGGRDAVILLTCVVH) the chain is on the lumenal side. A helical membrane pass occupies residues 882–902 (PALVFDITKLLLAIFGPLWIL). The 128-residue stretch at 899–1026 (LWILQASLLK…GMVSKGWRLL (128 aa)) folds into the Peptidase C18 domain. At 903 to 1657 (QASLLKVPYF…CMSADLEVVT (755 aa)) the chain is on the cytoplasmic side. The interval 904 to 1206 (ASLLKVPYFV…PVENLETTMR (303 aa)) is protease NS2-3. Residue C922 is the site of S-palmitoyl cysteine; by host attachment. Residues 929 to 949 (AGGHYVQMAIIKLGALTGTCV) form an interaction with host SCPS1 region. Residues H952, E972, and C993 each act as for protease NS2 activity; shared with dimeric partner in the active site. The Peptidase S29 domain occupies 1027 to 1208 (APITAYAQQT…ENLETTMRSP (182 aa)). Active-site charge relay system; for serine protease NS3 activity residues include H1083 and D1107. The Zn(2+) site is built by C1123 and C1125. S1165 (charge relay system; for serine protease NS3 activity) is an active-site residue. Zn(2+) is bound by residues C1171 and H1175. The Helicase ATP-binding domain maps to 1217–1369 (PAVPQSFQVA…PNIEEVALST (153 aa)). 1230 to 1237 (APTGSGKS) is an ATP binding site. Positions 1237 and 1317 each coordinate Mg(2+). The short motif at 1316–1319 (DECH) is the DECH box element. Residues 1486 to 1497 (QRRGRTGRGKPG) are RNA-binding. A helical transmembrane segment spans residues 1658–1678 (STWVLVGGVLAALAAYCLSTG). The segment at 1679 to 1690 (CVVIVGRIVLSG) is NS3-binding. Residues 1679–1805 (CVVIVGRIVL…AVTSPLTTGQ (127 aa)) lie on the Cytoplasmic side of the membrane. The chain crosses the membrane as a helical span at residues 1806-1824 (TLLFNILGGWVAAQLAAPG). Topologically, residues 1825–1828 (AATA) are lumenal. The helical transmembrane segment at 1829–1849 (FVGAGLAGAALDSVGLGKVLV) threads the bilayer. Residues 1833-1861 (GLAGAALDSVGLGKVLVDILAGYGAGVAG) form a glycine zipper region. Residue D1850 is a topological domain, cytoplasmic. The chain crosses the membrane as a helical span at residues 1851–1871 (ILAGYGAGVAGALVAFKIMSG). The Lumenal segment spans residues 1872–1881 (EVPSTEDLVN). Residues 1882–1902 (LLPAILSPGALAVGVVFASIL) traverse the membrane as a helical segment. At 1903–1972 (RRRVGPGEGA…WISSECTTPC (70 aa)) the chain is on the cytoplasmic side. C1968 is lipidated: S-palmitoyl cysteine; by host. C1972 carries S-palmitoyl cysteine; by host; partial lipidation. An intramembrane segment occupies 1973–2003 (SGSWLRDIWDWICEVLSDFKTWLKAKLMPQL). Positions 1978–1998 (RDIWDWICEVLSDFKTWLKAK) are membrane-binding. Residues 2004–2990 (PGIPFVSCQR…YHSVSHARPR (987 aa)) lie on the Cytoplasmic side of the membrane. The tract at residues 2005-2221 (GIPFVSCQRG…KATCTANHDS (217 aa)) is D1; RNA-binding. The Zn(2+) site is built by C2011, C2029, C2031, and C2052. Positions 2120 to 2208 (EFFTELDGVR…ASSSASQLSA (89 aa)) are FKBP8-binding. The interval 2120 to 2332 (EFFTELDGVR…PVPPPRKKRT (213 aa)) is transcriptional activation. The interval 2135 to 2139 (PPCKP) is interaction with non-structural protein 4A. An interaction with host SKP2 region spans residues 2189-2441 (RLARGSPPSM…TPCAAEEQKL (253 aa)). At S2194 the chain carries Phosphoserine; by host; in p56. S2197 carries the post-translational modification Phosphoserine; by host; in p58. S2201 carries the phosphoserine; by host; in p56 and p58, regulates intracellular NS5A distribution modification. S2204, S2207, and S2210 each carry phosphoserine; by host; in p58. The segment at 2210–2249 (SLKATCTANHDSPDAELIEANLLWRQEMGGNITRVESENK) is ISDR. Residues 2210–2275 (SLKATCTANH…REVSVPAEIL (66 aa)) are interaction with EIF2AK2/PKR. The interval 2223–2315 (DAELIEANLL…YEPPVVHGCP (93 aa)) is D2. The tract at residues 2224 to 2315 (AELIEANLLW…YEPPVVHGCP (92 aa)) is disordered. The interval 2249 to 2306 (KVVILDSFDPLVAEEDEREVSVPAEILRKSRRFAPALPVWARPDYNPLLVETWKKPDY) is NS4B-binding. The interaction with human PPIA/CYPA stretch occupies residues 2281–2297 (FAPALPVWARPDYNPLL). The span at 2315–2326 (PLPPPRSPPVPP) shows a compositional bias: pro residues. S2321 is modified (phosphoserine; by host). The SH3-binding motif lies at 2322–2325 (PPVP). The Nuclear localization signal signature appears at 2326 to 2334 (PPRKKRTVV). Residues 2329–2420 (KKRTVVLTES…GADTEDVVCC (92 aa)) are D3. Residues 2332–2441 (TVVLTESTLP…TPCAAEEQKL (110 aa)) form an interaction with host IFI27 region. The segment at 2346 to 2409 (ELATKSFGSS…LSDGSWSTVS (64 aa)) is disordered. The span at 2349–2369 (TKSFGSSSTSGITGDNTTTSS) shows a compositional bias: low complexity. Residue K2350 forms a Glycyl lysine isopeptide (Lys-Gly) (interchain with G-Cter in ubiquitin) linkage. Positions 2354-2377 (SSSTSGITGDNTTTSSEPAPSGCP) are V3. Residues 2367-2417 (TSSEPAPSGCPPDSDVESYSSMPPLEGEPGDPDLSDGSWSTVSSGADTEDV) form an interaction with host VAPB region. S2449 and S2462 each carry phosphoserine; by host. Positions 2634 to 2752 (PMGLSYDTRC…ICESAGVQED (119 aa)) constitute a RdRp catalytic domain. Mg(2+) is bound by residues D2640, D2738, and D2739. A helical membrane pass occupies residues 2991–3011 (WFWFCLLLLAAGVGIYLLPNR).

This sequence belongs to the hepacivirus polyprotein family. As to quaternary structure, homooligomer. Interacts with E1 (via C-terminus). Interacts with the non-structural protein 5A. Interacts (via N-terminus) with host STAT1 (via SH2 domain); this interaction results in decreased STAT1 phosphorylation and ubiquitin-mediated proteasome-dependent STAT1 degradation, leading to decreased IFN-stimulated gene transcription. Interacts with host STAT3; this interaction constitutively activates STAT3. Associates with host LTBR receptor. Interacts with host TNFRSF1A receptor and possibly induces apoptosis. Interacts with host HNRPK. Interacts with host YWHAE. Interacts with host UBE3A/E6AP. Interacts with host DDX3X. Interacts with host APOA2. Interacts with host RXRA protein. Interacts with host SP110 isoform 3/Sp110b; this interaction sequesters the transcriptional corepressor SP110 away from the nucleus. Interacts with host CREB3 nuclear transcription protein; this interaction triggers cell transformation. Interacts with host ACY3. Interacts with host C1QR1. Interacts with host RBM24; this interaction, which enhances the interaction of the mature core protein with 5'-UTR, may inhibit viral translation and favor replication. Interacts (via N-terminus) with host EIF2AK2/PKR (via N-terminus); this interaction induces the autophosphorylation of EIF2AK2. Part of the viral assembly initiation complex composed of NS2, E1, E2, NS3, NS4A, NS5A and the mature core protein. In terms of assembly, forms a heterodimer with envelope glycoprotein E2. Interacts with mature core protein. Interacts with protease NS2. The heterodimer E1/E2 interacts with host CLDN1; this interaction plays a role in viral entry into host cell. Interacts with host SPSB2 (via C-terminus). Part of the viral assembly initiation complex composed of NS2, E1, E2, NS3, NS4A, NS5A and the mature core protein. Interacts with host NEURL3; this interaction prevents E1 binding to glycoprotein E2. Forms a heterodimer with envelope glycoprotein E1. Interacts with host CD81 and SCARB1 receptors; these interactions play a role in viral entry into host cell. Interacts with host EIF2AK2/PKR; this interaction inhibits EIF2AK2 and probably allows the virus to evade the innate immune response. Interacts with host CD209/DC-SIGN and CLEC4M/DC-SIGNR. Interact with host SPCS1; this interaction is essential for viral particle assembly. Interacts with protease NS2. The heterodimer E1/E2 interacts with host CLDN1; this interaction plays a role in viral entry into host cell. Part of the viral assembly initiation complex composed of NS2, E1, E2, NS3, NS4A, NS5A and the mature core protein. Interacts with host SLC3A2/4F2hc; the interaction may facilitate viral entry into host cell. Interacts with human PLSCR1. As to quaternary structure, homohexamer. Homoheptamer. Interacts with protease NS2. In terms of assembly, homodimer. Interacts with host SPCS1; this interaction is essential for viral particle assembly. Interacts with envelope glycoprotein E1. Interacts with envelope glycoprotein E2. Interacts with viroporin p7. Interacts with serine protease/helicase NS3. Part of the replication complex composed of NS2, NS3, NS4A, NS4B, NS5A and the RNA-directed RNA polymerase embedded in an ER-derived membranous web. Part of the viral assembly initiation complex composed of NS2, E1, E2, NS3, NS4A, NS5A and the mature core protein. Interacts with protease NS2. Interacts with non-structural protein 4A; this interaction stabilizes the folding of NS3 serine protease. NS3-NS4A interaction is essential for NS3 activation and allows membrane anchorage of the latter. NS3/NS4A complex also prevents phosphorylation of host IRF3, thus preventing the establishment of dsRNA induced antiviral state. Interacts with host MAVS; this interaction leads to the cleavage and inhibition of host MAVS. Interacts with host TICAM1; this interaction leads to the cleavage and inhibition of host TICAM1. Interacts with host TANK-binding kinase/TBK1; this interaction results in the inhibition of the association between TBK1 and IRF3, which leads to the inhibition of IRF3 activation. Interacts with host RBM24. Part of the replication complex composed of NS2, NS3, NS4A, NS4B, NS5A and the RNA-directed RNA polymerase embedded in an ER-derived membranous web. Part of the viral assembly initiation complex composed of NS2, E1, E2, NS3, NS4A, NS5A and the mature core protein. As to quaternary structure, interacts with NS3 serine protease; this interaction stabilizes the folding of NS3 serine protease. NS3-NS4A interaction is essential for NS3 activation and allows membrane anchorage of the latter. Interacts with non-structural protein 5A (via N-terminus). Part of the replication complex composed of NS2, NS3, NS4A, NS4B, NS5A and the RNA-directed RNA polymerase embedded in an ER-derived membranous web. Part of the viral assembly initiation complex composed of NS2, E1, E2, NS3, NS4A, NS5A and the mature core protein. In terms of assembly, homomultimer. Interacts with non-structural protein NS5A. Interacts with host PLA2G4C; this interaction likely initiates the recruitment of replication complexes to lipid droplets. Interacts with host STING; this interaction disrupts the interaction between STING and TBK1 thereby suppressing the interferon signaling. Interacts with host METTL22; this interaction may promote the recruitment of NS4B in the proximity of lipid droplet. Part of the replication complex composed of NS2, NS3, NS4A, NS4B, NS5A and the RNA-directed RNA polymerase embedded in an ER-derived membranous web. Monomer. Homodimer; dimerization is required for RNA-binding. Interacts with the mature core protein. Interacts (via N-terminus) with non-structural protein 4A. Interacts with non-structural protein 4B. Interacts (via region D2) with RNA-directed RNA polymerase. Part of the viral assembly initiation complex composed of NS2, E1, E2, NS3, NS4A, NS5A and the mature core protein. Part of the replication complex composed of NS2, NS3, NS4A, NS4B, NS5A and the RNA-directed RNA polymerase embedded in an ER-derived membranous web. Interacts with host GRB2. Interacts with host BIN1. Interacts with host PIK3R1. Interacts with host SRCAP. Interacts with host FKBP8. Interacts (via C-terminus) with host VAPB (via MSP domain). Interacts with host EIF2AK2/PKR; this interaction leads to disruption of EIF2AK2 dimerization by NS5A and probably allows the virus to evade the innate immune response. Interacts (via N-terminus) with host PACSIN2 (via N-terminus); this interaction attenuates protein kinase C alpha-mediated phosphorylation of PACSIN2 by disrupting the interaction between PACSIN2 and PRKCA. Interacts (via N-terminus) with host SRC kinase (via SH2 domain). Interacts with most Src-family kinases. Interacts with host IFI27 and SKP2; promotes the ubiquitin-mediated proteasomal degradation of NS5A. Interacts with host GPS2. Interacts with host TNFRSF21; this interaction allows the modulation by the virus of JNK, p38 MAPK, STAT3, and Akt signaling pathways in a DR6-dependent manner. Interacts (via N-terminus) with host CIDEB (via N-terminus); this interaction seems to regulate the association of HCV particles with APOE. Interacts with host CHKA/Choline Kinase-alpha; CHKA bridges host PI4KA and NS5A and potentiates NS5A-stimulated PI4KA activity, which then facilitates the targeting of the ternary complex to the ER for viral replication. Interacts with host SPSB2 (via C-terminus); this interaction targets NS5A for ubiquitination and degradation. Interacts with host RAB18; this interaction may promote the association of NS5A and other replicase components with lipid droplets. Interacts (via region D2) with host PPIA/CYPA; the interaction stimulates RNA-binding ability of NS5A and is dependent on the peptidyl-prolyl cis-trans isomerase activity of PPIA/CYPA. Interacts with host TRIM14; this interaction induces the degradation of NS5A. As to quaternary structure, homooligomer. Interacts with non-structural protein 5A. Interacts with host VAPB. Interacts with host PRK2/PKN2. Interacts with host HNRNPA1 and SEPT6; these interactions facilitate the viral replication. Part of the replication complex composed of NS2, NS3, NS4A, NS4B, NS5A and the RNA-directed RNA polymerase embedded in an ER-derived membranous web. It depends on Zn(2+) as a cofactor. Requires Mg(2+) as cofactor. Specific enzymatic cleavages in vivo yield mature proteins. The structural proteins, core, E1, E2 and p7 are produced by proteolytic processing by host signal peptidases. The core protein precursor is synthesized as a 23 kDa, which is retained in the ER membrane through the hydrophobic signal peptide. Cleavage by the signal peptidase releases the 21 kDa mature core protein. The cleavage of the core protein precursor occurs between aminoacids 176 and 188 but the exact cleavage site is not known. Some degraded forms of the core protein appear as well during the course of infection. The other proteins (p7, NS2, NS3, NS4A, NS4B, NS5A and NS5B) are cleaved by the viral proteases. Autoprocessing between NS2 and NS3 is mediated by the NS2 cysteine protease catalytic domain and regulated by the NS3 N-terminal domain. Post-translationally, phosphorylated by host PKC and PKA. In terms of processing, ubiquitinated; mediated by UBE3A and leading to core protein subsequent proteasomal degradation. Highly N-glycosylated. Post-translationally, palmitoylation is required for NS2/3 autoprocessing and E2 recruitment to membranes. In terms of processing, palmitoylated. This modification may play a role in its polymerization or in protein-protein interactions. Cleaved by host caspases which are probably activated by the viral infection. Post-translationally, ubiquitinated. Ubiquitination, most probably at Lys-2350, mediated by host IFI27 and SKP2 leads to proteasomal degradation, restricting viral infection. Ubiquitination by host TRIM22 leads to interruption of viral replication. In terms of processing, phosphorylated on serines in a basal form termed p56. p58 is a hyperphosphorylated form of p56. p56 and p58 coexist in the cell in roughly equivalent amounts. Hyperphosphorylation is dependent on the presence of NS4A. Host CSNK1A1/CKI-alpha, PI4KA or RPS6KB1 kinases may be responsible for NS5A phosphorylation. Phosphorylated NS5A is involved in viral replication. Tyrosine phosphorylation is essential for the interaction with host SRC. Post-translationally, the N-terminus is phosphorylated by host PRK2/PKN2.

The protein resides in the host endoplasmic reticulum membrane. It is found in the host mitochondrion membrane. It localises to the virion. The protein localises to the host cytoplasm. Its subcellular location is the host nucleus. The protein resides in the host lipid droplet. It is found in the virion membrane. It localises to the host mitochondrion. The protein localises to the host cell membrane. Its subcellular location is the host perinuclear region. The enzyme catalyses Hydrolysis of four peptide bonds in the viral precursor polyprotein, commonly with Asp or Glu in the P6 position, Cys or Thr in P1 and Ser or Ala in P1'.. It carries out the reaction a ribonucleoside 5'-triphosphate + H2O = a ribonucleoside 5'-diphosphate + phosphate + H(+). The catalysed reaction is ATP + H2O = ADP + phosphate + H(+). It catalyses the reaction RNA(n) + a ribonucleoside 5'-triphosphate = RNA(n+1) + diphosphate. With respect to regulation, inhibited by the antiviral drug hexamethylene amiloride. Inhibited by amantadine. Inhibition by amantadine appears to be genotype-dependent. Also inhibited by long-alkyl-chain iminosugar derivatives. Its activity is regulated as follows. Activity is up-regulated by PRK2/PKN2-mediated phosphorylation. In terms of biological role, packages viral RNA to form a viral nucleocapsid, and promotes virion budding. Participates in the viral particle production as a result of its interaction with the non-structural protein 5A. Binds RNA and may function as a RNA chaperone to induce the RNA structural rearrangements taking place during virus replication. Modulates viral translation initiation by interacting with viral IRES and 40S ribosomal subunit. Affects various cell signaling pathways, host immunity and lipid metabolism. Prevents the establishment of cellular antiviral state by blocking the interferon-alpha/beta (IFN-alpha/beta) and IFN-gamma signaling pathways and by blocking the formation of phosphorylated STAT1 and promoting ubiquitin-mediated proteasome-dependent degradation of STAT1. Activates STAT3 leading to cellular transformation. Regulates the activity of cellular genes, including c-myc and c-fos. May repress the promoter of p53, and sequester CREB3 and SP110 isoform 3/Sp110b in the cytoplasm. Represses cell cycle negative regulating factor CDKN1A, thereby interrupting an important check point of normal cell cycle regulation. Targets transcription factors involved in the regulation of inflammatory responses and in the immune response: suppresses NF-kappa-B activation, and activates AP-1. Binds to dendritic cells (DCs) via C1QR1, resulting in down-regulation of T-lymphocytes proliferation. Alters lipid metabolism by interacting with hepatocellular proteins involved in lipid accumulation and storage. Induces up-regulation of FAS promoter activity, and thereby contributes to the increased triglyceride accumulation in hepatocytes (steatosis). Functionally, forms a heterodimer with envelope glycoprotein E2, which mediates virus attachment to the host cell, virion internalization through clathrin-dependent endocytosis and fusion with host membrane. Fusion with the host cell is most likely mediated by both E1 and E2, through conformational rearrangements of the heterodimer required for fusion rather than a classical class II fusion mechanism. E1/E2 heterodimer binds host apolipoproteins such as APOB and APOE thereby forming a lipo-viro-particle (LVP). APOE associated to the LVP allows the initial virus attachment to cell surface receptors such as the heparan sulfate proteoglycans (HSPGs), syndecan-1 (SDC1), syndecan-1 (SDC2), the low-density lipoprotein receptor (LDLR) and scavenger receptor class B type I (SCARB1). The cholesterol transfer activity of SCARB1 allows E2 exposure and binding of E2 to SCARB1 and the tetraspanin CD81. E1/E2 heterodimer binding on CD81 activates the epithelial growth factor receptor (EGFR) signaling pathway. Diffusion of the complex E1/E2-EGFR-SCARB1-CD81 to the cell lateral membrane allows further interaction with Claudin 1 (CLDN1) and occludin (OCLN) to finally trigger HCV entry. Forms a heterodimer with envelope glycoprotein E1, which mediates virus attachment to the host cell, virion internalization through clathrin-dependent endocytosis and fusion with host membrane. Fusion with the host cell is most likely mediated by both E1 and E2, through conformational rearrangements of the heterodimer required for fusion rather than a classical class II fusion mechanism. The interaction between E2 and host apolipoprotein E/APOE allows the proper assembly, maturation and infectivity of the viral particles. This interaction is probably promoted via the up-regulation of cellular autophagy by the virus. E1/E2 heterodimer binds host apolipoproteins such as APOB and APOE thereby forming a lipo-viro-particle (LVP). APOE associated to the LVP allows the initial virus attachment to cell surface receptors such as the heparan sulfate proteoglycans (HSPGs), syndecan-1 (SDC1), syndecan-1 (SDC2), the low-density lipoprotein receptor (LDLR) and scavenger receptor class B type I (SCARB1). The cholesterol transfer activity of SCARB1 allows E2 exposure and binding of E2 to SCARB1 and the tetraspanin CD81. E1/E2 heterodimer binding on CD81 activates the epithelial growth factor receptor (EGFR) signaling pathway. Diffusion of the complex E1/E2-EGFR-SCARB1-CD81 to the cell lateral membrane allows further interaction with Claudin 1 (CLDN1) and occludin (OCLN) to finally trigger HCV entry. Inhibits host EIF2AK2/PKR activation, preventing the establishment of an antiviral state. Viral ligand for CD209/DC-SIGN and CLEC4M/DC-SIGNR, which are respectively found on DCs, and on liver sinusoidal endothelial cells and macrophage-like cells of lymph node sinuses. These interactions allow the capture of circulating HCV particles by these cells and subsequent facilitated transmission to permissive cells such as hepatocytes and lymphocyte subpopulations. The interaction between E2 and host amino acid transporter complex formed by SLC3A2 and SLC7A5/LAT1 may facilitate viral entry into host cell. Its function is as follows. Ion channel protein that acts as a viroporin and plays an essential role in the assembly, envelopment and secretion of viral particles. Participates in virus envelopment by coordinating the encounter between NS5A and NS2-based assembly sites loaded with E1/E2 heterodimer, which subsequently leads to nucleocapsid envelopment. Creates a pore in acidic organelles and releases Ca(2+) and H(+) in the cytoplasm of infected cells, leading to a productive viral infection. High levels of cytoplasmic Ca(2+) may trigger membrane trafficking and transport of viral ER-associated proteins to viroplasms, sites of viral genome replication. The release of Ca(2+) may also activate the inflamasome leading to chronic inflammation. Targets also host mitochondria and induces mitochondrial depolarization. In addition of its role as a viroporin, acts as a lipid raft adhesion factor. In terms of biological role, cysteine protease required for the proteolytic auto-cleavage between the non-structural proteins NS2 and NS3. The N-terminus of NS3 is required for the function of NS2 protease (active region NS2-3). Promotes the initiation of viral particle assembly by mediating the interaction between structural and non-structural proteins. Functionally, displays three enzymatic activities: serine protease with a chymotrypsin-like fold, NTPase and RNA helicase. NS3 serine protease, in association with NS4A, is responsible for the cleavages of NS3-NS4A, NS4A-NS4B, NS4B-NS5A and NS5A-NS5B. The NS3/NS4A complex prevents phosphorylation of host IRF3, thus preventing the establishment of dsRNA induced antiviral state. The NS3/NS4A complex induces host amino acid transporter component SLC3A2, thus contributing to HCV propagation. NS3 RNA helicase binds to RNA and unwinds both dsDNA and dsRNA in the 3' to 5' direction, and likely resolves RNA complicated stable secondary structures in the template strand. Binds a single ATP and catalyzes the unzipping of a single base pair of dsRNA. Inhibits host antiviral proteins TBK1 and IRF3 thereby preventing the establishment of an antiviral state. Cleaves host MAVS/CARDIF thereby preventing the establishment of an antiviral state. Cleaves host TICAM1/TRIF, thereby disrupting TLR3 signaling and preventing the establishment of an antiviral state. Peptide cofactor which forms a non-covalent complex with the N-terminal of NS3 serine protease. The NS3/NS4A complex prevents phosphorylation of host IRF3, thus preventing the establishment of dsRNA induced antiviral state. The NS3/NS4A complex induces host amino acid transporter component SLC3A2, thus contributing to HCV propagation. Its function is as follows. Induces a specific membrane alteration that serves as a scaffold for the virus replication complex. This membrane alteration gives rise to the so-called ER-derived membranous web that contains the replication complex. NS4B self-interaction contributes to its function in membranous web formation. Promotes host TRIF protein degradation in a CASP8-dependent manner thereby inhibiting host TLR3-mediated interferon signaling. Disrupts the interaction between STING and TBK1 contributing to the inhibition of interferon signaling. In terms of biological role, phosphorylated protein that is indispensable for viral replication and assembly. Both hypo- and hyperphosphorylated states are required for the viral life cycle. The hyperphosphorylated form of NS5A is an inhibitor of viral replication. Involved in RNA-binding and especially in binding to the viral genome. Zinc is essential for RNA-binding. Participates in the viral particle production as a result of its interaction with the viral mature core protein. Its interaction with host VAPB may target the viral replication complex to vesicles. Down-regulates viral IRES translation initiation. Mediates interferon resistance, presumably by interacting with and inhibiting host EIF2AK2/PKR. Prevents BIN1-induced apoptosis. Acts as a transcriptional activator of some host genes important for viral replication when localized in the nucleus. Via the interaction with host PACSIN2, modulates lipid droplet formation in order to promote virion assembly. Modulates TNFRSF21/DR6 signaling pathway for viral propagation. Functionally, RNA-dependent RNA polymerase that performs primer-template recognition and RNA synthesis during viral replication. Initiates RNA transcription/replication at a flavin adenine dinucleotide (FAD), resulting in a 5'- FAD cap on viral RNAs. In this way, recognition of viral 5' RNA by host pattern recognition receptors can be bypassed, thereby evading activation of antiviral pathways. This chain is Genome polyprotein, found in Homo sapiens (Human).